We begin with the raw amino-acid sequence, 357 residues long: Protein ORF58 (357 aa).

The next 11 membrane-spanning stretches (helical) occupy residues 20 to 40, 44 to 64, 78 to 98, 101 to 121, 132 to 152, 157 to 177, 219 to 239, 242 to 262, 270 to 290, 300 to 320, and 333 to 353; these read LAAT…FTLF, ITAV…CMCL, WICA…GFTF, VPFI…YPLA, IVHR…YLLL, FVSG…LLAF, VVVF…IGLL, VLIG…SCVG, ALFV…ILGS, CLCC…IQLI, and MVLA…SVIN.

Belongs to the herpesviridae BMRF2 family.

It is found in the virion membrane. The protein localises to the host cell membrane. Its function is as follows. Participates in rearrangement of cellular actin to increase intercellular contacts and thereby promotes virus cell-to-cell spreadin$g. The chain is Protein ORF58 (ORF58) from Homo sapiens (Human).